A 366-amino-acid chain; its full sequence is Chorismate synthase (366 aa).

NADP(+) contacts are provided by Arg-48 and Arg-54. Residues 125 to 127 (RSS), 238 to 239 (NA), Gly-278, 293 to 297 (KPTSS), and Arg-319 each bind FMN.

This sequence belongs to the chorismate synthase family. Homotetramer. FMNH2 is required as a cofactor.

The catalysed reaction is 5-O-(1-carboxyvinyl)-3-phosphoshikimate = chorismate + phosphate. Its pathway is metabolic intermediate biosynthesis; chorismate biosynthesis; chorismate from D-erythrose 4-phosphate and phosphoenolpyruvate: step 7/7. In terms of biological role, catalyzes the anti-1,4-elimination of the C-3 phosphate and the C-6 proR hydrogen from 5-enolpyruvylshikimate-3-phosphate (EPSP) to yield chorismate, which is the branch point compound that serves as the starting substrate for the three terminal pathways of aromatic amino acid biosynthesis. This reaction introduces a second double bond into the aromatic ring system. This is Chorismate synthase from Paraburkholderia xenovorans (strain LB400).